A 788-amino-acid chain; its full sequence is uncharacterized protein (788 aa).

Residues 485-693 enclose the Adrift-type SAM-dependent 2'-O-MTase domain; it reads EMITTAWIKL…IYIVLKSYKG (209 aa). Residues glycine 521 and aspartate 604 each contribute to the S-adenosyl-L-methionine site. Lysine 645 acts as the Proton acceptor in catalysis.

This is an uncharacterized protein from Acanthamoeba polyphaga (Amoeba).